A 428-amino-acid chain; its full sequence is Homocitrate synthase, cytosolic isozyme (428 aa).

In terms of domain architecture, Pyruvate carboxyltransferase spans 23–276 (FQLIDSTLRE…KSKYKLHKIR (254 aa)). Arginine 31 contributes to the 2-oxoglutarate binding site. Glutamate 32 contacts Mg(2+). 2-oxoglutarate-binding residues include histidine 91, arginine 151, and threonine 185. Mg(2+) contacts are provided by histidine 212 and histidine 214. The Proton acceptor role is filled by histidine 309. Serine 385 bears the Phosphoserine mark. Threonine 396 bears the Phosphothreonine mark. Residues 399 to 428 (VLSAKKNKKNDSDVPELATIPAAKRTKPSA) form a disordered region. Phosphoserine is present on residues serine 401 and serine 410.

It belongs to the alpha-IPM synthase/homocitrate synthase family. Homocitrate synthase LYS20/LYS21 subfamily. Requires Mg(2+) as cofactor. It depends on Mn(2+) as a cofactor.

The protein resides in the cytoplasm. It catalyses the reaction acetyl-CoA + 2-oxoglutarate + H2O = (2R)-homocitrate + CoA + H(+). It participates in amino-acid biosynthesis; L-lysine biosynthesis via AAA pathway; L-alpha-aminoadipate from 2-oxoglutarate: step 1/5. In terms of biological role, catalyzes the aldol-type condensation of 2-oxoglutarate with acetyl-CoA to yield homocitrate. Carries out the first step of the alpha-aminoadipate (AAA) lysine biosynthesis pathway. This Saccharomyces cerevisiae (strain ATCC 204508 / S288c) (Baker's yeast) protein is Homocitrate synthase, cytosolic isozyme (LYS20).